Consider the following 189-residue polypeptide: dCTP deaminase (189 aa).

Residues Lys-112 to Arg-117, Thr-136 to Glu-138, Gln-157, Tyr-171, and Gln-181 contribute to the dCTP site. Glu-138 (proton donor/acceptor) is an active-site residue.

The protein belongs to the dCTP deaminase family. Homotrimer.

It carries out the reaction dCTP + H2O + H(+) = dUTP + NH4(+). It functions in the pathway pyrimidine metabolism; dUMP biosynthesis; dUMP from dCTP (dUTP route): step 1/2. Its function is as follows. Catalyzes the deamination of dCTP to dUTP. This Methylacidiphilum infernorum (isolate V4) (Methylokorus infernorum (strain V4)) protein is dCTP deaminase.